The following is a 220-amino-acid chain: Urease accessory protein UreF (220 aa).

It belongs to the UreF family. As to quaternary structure, ureD, UreF and UreG form a complex that acts as a GTP-hydrolysis-dependent molecular chaperone, activating the urease apoprotein by helping to assemble the nickel containing metallocenter of UreC. The UreE protein probably delivers the nickel.

It is found in the cytoplasm. Required for maturation of urease via the functional incorporation of the urease nickel metallocenter. This is Urease accessory protein UreF from Bordetella bronchiseptica (strain ATCC BAA-588 / NCTC 13252 / RB50) (Alcaligenes bronchisepticus).